Here is a 307-residue protein sequence, read N- to C-terminus: Lipoyl synthase (307 aa).

The [4Fe-4S] cluster site is built by cysteine 55, cysteine 60, cysteine 66, cysteine 81, cysteine 85, cysteine 88, and serine 292. The 215-residue stretch at 67–281 (WEDREATFLI…ARHAEELGFS (215 aa)) folds into the Radical SAM core domain.

This sequence belongs to the radical SAM superfamily. Lipoyl synthase family. [4Fe-4S] cluster is required as a cofactor.

It localises to the cytoplasm. It catalyses the reaction [[Fe-S] cluster scaffold protein carrying a second [4Fe-4S](2+) cluster] + N(6)-octanoyl-L-lysyl-[protein] + 2 oxidized [2Fe-2S]-[ferredoxin] + 2 S-adenosyl-L-methionine + 4 H(+) = [[Fe-S] cluster scaffold protein] + N(6)-[(R)-dihydrolipoyl]-L-lysyl-[protein] + 4 Fe(3+) + 2 hydrogen sulfide + 2 5'-deoxyadenosine + 2 L-methionine + 2 reduced [2Fe-2S]-[ferredoxin]. The protein operates within protein modification; protein lipoylation via endogenous pathway; protein N(6)-(lipoyl)lysine from octanoyl-[acyl-carrier-protein]: step 2/2. Catalyzes the radical-mediated insertion of two sulfur atoms into the C-6 and C-8 positions of the octanoyl moiety bound to the lipoyl domains of lipoate-dependent enzymes, thereby converting the octanoylated domains into lipoylated derivatives. This chain is Lipoyl synthase, found in Mycobacterium avium (strain 104).